Reading from the N-terminus, the 197-residue chain is Phosphoheptose isomerase (197 aa).

An SIS domain is found at 40–197; that stretch reads CIASIAQGGK…LVEHSIFGKQ (158 aa). 55 to 57 contributes to the substrate binding site; the sequence is NGG. 2 residues coordinate Zn(2+): H64 and E68. Residues E68, 97–98, 123–125, S128, and Q175 each bind substrate; these read ND and STS. Residues Q175 and H183 each coordinate Zn(2+).

This sequence belongs to the SIS family. GmhA subfamily. Homotetramer. The cofactor is Zn(2+).

The protein localises to the cytoplasm. The catalysed reaction is 2 D-sedoheptulose 7-phosphate = D-glycero-alpha-D-manno-heptose 7-phosphate + D-glycero-beta-D-manno-heptose 7-phosphate. Its pathway is carbohydrate biosynthesis; D-glycero-D-manno-heptose 7-phosphate biosynthesis; D-glycero-alpha-D-manno-heptose 7-phosphate and D-glycero-beta-D-manno-heptose 7-phosphate from sedoheptulose 7-phosphate: step 1/1. It participates in capsule biogenesis; capsule polysaccharide biosynthesis. Functionally, catalyzes the isomerization of sedoheptulose 7-phosphate in D-glycero-D-manno-heptose 7-phosphate. The chain is Phosphoheptose isomerase from Burkholderia mallei (strain ATCC 23344).